A 261-amino-acid chain; its full sequence is Imidazole glycerol phosphate synthase subunit HisF (261 aa).

Residues aspartate 16 and aspartate 135 contribute to the active site.

Belongs to the HisA/HisF family. In terms of assembly, heterodimer of HisH and HisF.

It localises to the cytoplasm. It carries out the reaction 5-[(5-phospho-1-deoxy-D-ribulos-1-ylimino)methylamino]-1-(5-phospho-beta-D-ribosyl)imidazole-4-carboxamide + L-glutamine = D-erythro-1-(imidazol-4-yl)glycerol 3-phosphate + 5-amino-1-(5-phospho-beta-D-ribosyl)imidazole-4-carboxamide + L-glutamate + H(+). Its pathway is amino-acid biosynthesis; L-histidine biosynthesis; L-histidine from 5-phospho-alpha-D-ribose 1-diphosphate: step 5/9. Functionally, IGPS catalyzes the conversion of PRFAR and glutamine to IGP, AICAR and glutamate. The HisF subunit catalyzes the cyclization activity that produces IGP and AICAR from PRFAR using the ammonia provided by the HisH subunit. This Mycobacterium ulcerans (strain Agy99) protein is Imidazole glycerol phosphate synthase subunit HisF.